Consider the following 100-residue polypeptide: Urease subunit gamma (100 aa).

This sequence belongs to the urease gamma subunit family. Heterotrimer of UreA (gamma), UreB (beta) and UreC (alpha) subunits. Three heterotrimers associate to form the active enzyme.

The protein resides in the cytoplasm. The catalysed reaction is urea + 2 H2O + H(+) = hydrogencarbonate + 2 NH4(+). It participates in nitrogen metabolism; urea degradation; CO(2) and NH(3) from urea (urease route): step 1/1. The polypeptide is Urease subunit gamma (Lachnoclostridium phytofermentans (strain ATCC 700394 / DSM 18823 / ISDg) (Clostridium phytofermentans)).